A 414-amino-acid polypeptide reads, in one-letter code: FAD-dependent monooxygenase adaC (414 aa).

Glu-32, Ala-43, Arg-115, Asp-325, and Gly-338 together coordinate FAD.

Belongs to the paxM FAD-dependent monooxygenase family. Requires FAD as cofactor.

It carries out the reaction 3-(2,4-dioxopentyl)-3,6,8,9-tetrahydroxy-1-oxo-1,2,3,4-tetrahydroanthracene-2-carboxyl-[ACP] + NADPH + O2 + H(+) = 3-(2,4-dioxopentyl)-2,3,6,8,9-pentahydroxy-1-oxo-1,2,3,4-tetrahydroanthracene-2-carboxyl-[ACP] + NADP(+) + H2O. It participates in secondary metabolite biosynthesis. Functionally, FAD-dependent monooxygenase; part of the gene cluster that mediates the biosynthesis of the linear tetracyclic TAN-1612 neuropeptide Y receptor antagonist. The decaketide backbone of TAN-1612 is synthesized by the non-reducing polyketide synthase adaA via condensation of one acetyl-CoA starter unit with 9 malonyl-CoA units. The FAD-dependent monooxygenase adaC then performs hydroxylation at C2 while the polaketide chain is still attached to the NRPKS adaA. The alpha-hydroxylation step at C2 appears to be crucial for the following C18-C1 Claisen cyclization and release of the C9-hydroxyl version of TAN-1612 from the NRPKS adaA, two steps performed by the lactamase-like protein adaB. Finally, the O-methyltransferase adaD performs the C9 O-methylation to complete the biosynthesis of TAN-1612. The polypeptide is FAD-dependent monooxygenase adaC (Aspergillus niger (strain ATCC MYA-4892 / CBS 513.88 / FGSC A1513)).